The chain runs to 230 residues: MDNKIIVALDYETEYEALSFVDQVDPSLCRVKVGKEMFTTLGTNFVKQLHERKFDVFLDLKYHDIPNTVARAVRSAADLGVWMVDLHASGGLTMMEEAKKILEPYGKDAPLLIAVTVLTSMEDLDLLQIGINASPMEQVIRLAHLAQRAGLDGVVCSPQEVEVLRTHCGKDFKLVTPGIRPEGSDVGDQRRIMTPKQAIETGSDYLVIGRPITQAQDPLSVLKSINASIR.

Substrate-binding positions include Asp10, Lys32, 59-68, Thr119, Arg180, Gln189, Gly209, and Arg210; that span reads DLKYHDIPNT. Lys61 (proton donor) is an active-site residue.

This sequence belongs to the OMP decarboxylase family. Type 1 subfamily. In terms of assembly, homodimer.

It carries out the reaction orotidine 5'-phosphate + H(+) = UMP + CO2. It functions in the pathway pyrimidine metabolism; UMP biosynthesis via de novo pathway; UMP from orotate: step 2/2. Its function is as follows. Catalyzes the decarboxylation of orotidine 5'-monophosphate (OMP) to uridine 5'-monophosphate (UMP). In Actinobacillus pleuropneumoniae serotype 5b (strain L20), this protein is Orotidine 5'-phosphate decarboxylase.